The following is a 96-amino-acid chain: Small ribosomal subunit protein bS20 (96 aa).

Belongs to the bacterial ribosomal protein bS20 family.

Functionally, binds directly to 16S ribosomal RNA. In Anaplasma phagocytophilum (strain HZ), this protein is Small ribosomal subunit protein bS20.